The primary structure comprises 185 residues: MINEIKQDSEKRMKKTIEALHSDMSKIRTGRANASLLDHVMVDYYGSPTPLSQVANITTSDSRTILVTPWEKSMVAAIEKAILNSDLGLNPATAGTAIRVPMPPLTEERRKELIKVVRHEGEQGRVSIRNIRRDANNQLKELVKEKAISEDDERRAAEAIQKLTDRYISEVDAVLAEKEKDLMEI.

This sequence belongs to the RRF family.

Its subcellular location is the cytoplasm. Responsible for the release of ribosomes from messenger RNA at the termination of protein biosynthesis. May increase the efficiency of translation by recycling ribosomes from one round of translation to another. In Legionella pneumophila (strain Paris), this protein is Ribosome-recycling factor.